Here is a 381-residue protein sequence, read N- to C-terminus: METAERVNLLGLDGAALSDLVGQWGGKPFRARQLQRWIHQRGADSFDAMTDLARDFRGQLAQQCRIQALPVNTEQRSSDGTRKWLFDVGQGNAIETVFIPEDDRGTLCVSSQAGCAVNCRFCSTGHQGFNRNLTSSEIIGQLWWAKRVLEADAGTARLGGAGNDDTRVVSNVVMMGMGEPLLNYDQLLPALRLMLDDNAYGLSRRRVTVSTSGVVPMMDRLSRDCPVALAVSLHAPTDALRDELVPLNKKYPLAELLAACERYLASAPRDFITFEYCMLDGINDTDQHARALIQVARQVRCKLNLIPFNPFPASGLKRSPSARVKVFAQRLMDAGIVTTVRKTRGDDIDAACGQLAGEVRDRTRVAQRNAGRTIPIAQVQA.

E95 (proton acceptor) is an active-site residue. In terms of domain architecture, Radical SAM core spans 101–347; that stretch reads EDDRGTLCVS…TTVRKTRGDD (247 aa). Cysteines 108 and 352 form a disulfide. [4Fe-4S] cluster-binding residues include C115, C119, and C122. S-adenosyl-L-methionine is bound by residues 178 to 179, S210, 232 to 234, and N309; these read GE and SLH. C352 functions as the S-methylcysteine intermediate in the catalytic mechanism.

Belongs to the radical SAM superfamily. RlmN family. The cofactor is [4Fe-4S] cluster.

The protein resides in the cytoplasm. It catalyses the reaction adenosine(2503) in 23S rRNA + 2 reduced [2Fe-2S]-[ferredoxin] + 2 S-adenosyl-L-methionine = 2-methyladenosine(2503) in 23S rRNA + 5'-deoxyadenosine + L-methionine + 2 oxidized [2Fe-2S]-[ferredoxin] + S-adenosyl-L-homocysteine. The enzyme catalyses adenosine(37) in tRNA + 2 reduced [2Fe-2S]-[ferredoxin] + 2 S-adenosyl-L-methionine = 2-methyladenosine(37) in tRNA + 5'-deoxyadenosine + L-methionine + 2 oxidized [2Fe-2S]-[ferredoxin] + S-adenosyl-L-homocysteine. Functionally, specifically methylates position 2 of adenine 2503 in 23S rRNA and position 2 of adenine 37 in tRNAs. m2A2503 modification seems to play a crucial role in the proofreading step occurring at the peptidyl transferase center and thus would serve to optimize ribosomal fidelity. This chain is Dual-specificity RNA methyltransferase RlmN, found in Bordetella petrii (strain ATCC BAA-461 / DSM 12804 / CCUG 43448).